A 433-amino-acid chain; its full sequence is Serine hydroxymethyltransferase (433 aa).

(6S)-5,6,7,8-tetrahydrofolate is bound by residues L132 and 136-138 (GHL). K241 carries the N6-(pyridoxal phosphate)lysine modification.

The protein belongs to the SHMT family. Homodimer. Pyridoxal 5'-phosphate is required as a cofactor.

The protein localises to the cytoplasm. The catalysed reaction is (6R)-5,10-methylene-5,6,7,8-tetrahydrofolate + glycine + H2O = (6S)-5,6,7,8-tetrahydrofolate + L-serine. It functions in the pathway one-carbon metabolism; tetrahydrofolate interconversion. The protein operates within amino-acid biosynthesis; glycine biosynthesis; glycine from L-serine: step 1/1. In terms of biological role, catalyzes the reversible interconversion of serine and glycine with tetrahydrofolate (THF) serving as the one-carbon carrier. This reaction serves as the major source of one-carbon groups required for the biosynthesis of purines, thymidylate, methionine, and other important biomolecules. Also exhibits THF-independent aldolase activity toward beta-hydroxyamino acids, producing glycine and aldehydes, via a retro-aldol mechanism. The chain is Serine hydroxymethyltransferase from Methylobacterium sp. (strain 4-46).